The primary structure comprises 369 residues: Chaperone protein DnaJ (369 aa).

The 67-residue stretch at 7 to 73 folds into the J domain; it reads DYYEILGVPR…QKRAMYDRFG (67 aa). The segment at 143 to 225 adopts a CR-type zinc-finger fold; it reads GAEIPVEYER…CGGSGRVLRK (83 aa). Cysteine 156, cysteine 159, cysteine 173, cysteine 176, cysteine 199, cysteine 202, cysteine 213, and cysteine 216 together coordinate Zn(2+). 4 CXXCXGXG motif repeats span residues 156–163, 173–180, 199–206, and 213–220; these read CPRCGGTG, CPSCGGTG, CERCGGTG, and CHECGGSG.

This sequence belongs to the DnaJ family. In terms of assembly, homodimer. The cofactor is Zn(2+).

The protein resides in the cytoplasm. Its function is as follows. Participates actively in the response to hyperosmotic and heat shock by preventing the aggregation of stress-denatured proteins and by disaggregating proteins, also in an autonomous, DnaK-independent fashion. Unfolded proteins bind initially to DnaJ; upon interaction with the DnaJ-bound protein, DnaK hydrolyzes its bound ATP, resulting in the formation of a stable complex. GrpE releases ADP from DnaK; ATP binding to DnaK triggers the release of the substrate protein, thus completing the reaction cycle. Several rounds of ATP-dependent interactions between DnaJ, DnaK and GrpE are required for fully efficient folding. Also involved, together with DnaK and GrpE, in the DNA replication of plasmids through activation of initiation proteins. The polypeptide is Chaperone protein DnaJ (Thermotoga sp. (strain RQ2)).